We begin with the raw amino-acid sequence, 373 residues long: Protein translocase subunit SecF (373 aa).

A run of 6 helical transmembrane segments spans residues 26 to 46 (IWYG…AVRG), 142 to 162 (WQGL…AFEW), 166 to 186 (LAAF…YALV), 193 to 213 (GTVI…VVVF), 251 to 271 (VVAL…LGAG), and 280 to 300 (LFVG…PLVA). The segment covering 322 to 332 (QGAAKGESAES) has biased composition (low complexity). Residues 322 to 373 (QGAAKGESAESAADEGAYDADEPDDAAPAVVGPRNQPASRGRGRGRPSGKRR) form a disordered region. Residues 333–346 (AADEGAYDADEPDD) are compositionally biased toward acidic residues. Residues 362-373 (GRGRGRPSGKRR) are compositionally biased toward basic residues.

Belongs to the SecD/SecF family. SecF subfamily. In terms of assembly, forms a complex with SecD. Part of the essential Sec protein translocation apparatus which comprises SecA, SecYEG and auxiliary proteins SecDF. Other proteins may also be involved.

It localises to the cell membrane. In terms of biological role, part of the Sec protein translocase complex. Interacts with the SecYEG preprotein conducting channel. SecDF uses the proton motive force (PMF) to complete protein translocation after the ATP-dependent function of SecA. The chain is Protein translocase subunit SecF from Streptomyces coelicolor (strain ATCC BAA-471 / A3(2) / M145).